Here is an 88-residue protein sequence, read N- to C-terminus: Protein U62 (88 aa).

This Elephantid herpesvirus 1 (isolate Asian elephant/Berlin/Kiba/1998) (EIHV-1) protein is Protein U62.